We begin with the raw amino-acid sequence, 800 residues long: N,N'-diacetylchitobiose phosphorylase (800 aa).

N-acetyl-alpha-D-glucosamine 1-phosphate contacts are provided by arginine 333, arginine 343, arginine 349, aspartate 350, tryptophan 490, and aspartate 492. Residue aspartate 492 is the Proton donor of the active site. N-acetyl-D-glucosamine is bound by residues aspartate 492, lysine 636, and glutamate 637. Positions 637, 644, 690, 709, and 710 each coordinate N-acetyl-alpha-D-glucosamine 1-phosphate.

This sequence belongs to the glycosyl hydrolase 94 family. Homodimer.

The enzyme catalyses N,N'-diacetylchitobiose + phosphate = N-acetyl-alpha-D-glucosamine 1-phosphate + N-acetyl-D-glucosamine. Functionally, catalyzes the reversible phosphorolysis of chitobiose (N,N'-diacetylchitobiose or (GlcNAc)(2)) into N-acetyl-alpha-D-glucosamine 1-phosphate (GlcNAc-1-P) and N-acetyl-D-glucosamine (GlcNAc) with inversion of the anomeric configuration. This is N,N'-diacetylchitobiose phosphorylase from Vibrio furnissii.